We begin with the raw amino-acid sequence, 965 residues long: Probable ion channel POLLUX (965 aa).

A compositionally biased stretch (low complexity) spans 1-11 (MAESDGGEASP). 2 disordered regions span residues 1-76 (MAES…APRG) and 108-158 (GPHA…KSLA). Polar residues predominate over residues 32-42 (LTKSRTISGSA). Composition is skewed to low complexity over residues 52-66 (SNSS…SSTA) and 118-149 (RSQQ…ASVS). 4 helical membrane passes run 187-207 (LSPY…LAIW), 251-271 (ADWN…VFLV), 317-337 (LALL…LYVV), and 369-389 (IVSV…LGLV). RCK N-terminal domains follow at residues 410–551 (VNHI…ETVV) and 670–818 (PEKI…DKSI).

It belongs to the castor/pollux (TC 1.A.1.23) family. Expressed in roots, leaves, stems and panicles.

Its subcellular location is the nucleus membrane. Required for mycorrhizal symbiosis. The sequence is that of Probable ion channel POLLUX from Oryza sativa subsp. japonica (Rice).